The sequence spans 156 residues: MPRKGPAPKRPVVADPVYGAPIVSQLVNKILLDGKKGLAEKIVYDALAGVAAKNGQDAVVTLKKALDNVRPALEVRSRRVGGSTYQVPIEVKPHRANTLALRWLTTYAKSRREKTMTERLTNEILDASNGLGAAVKRREDTHKMAESNKAFAHYRW.

It belongs to the universal ribosomal protein uS7 family. As to quaternary structure, part of the 30S ribosomal subunit. Contacts proteins S9 and S11.

One of the primary rRNA binding proteins, it binds directly to 16S rRNA where it nucleates assembly of the head domain of the 30S subunit. Is located at the subunit interface close to the decoding center, probably blocks exit of the E-site tRNA. This chain is Small ribosomal subunit protein uS7, found in Clavibacter michiganensis subsp. michiganensis (strain NCPPB 382).